A 213-amino-acid polypeptide reads, in one-letter code: Large ribosomal subunit protein uL1 (213 aa).

It belongs to the universal ribosomal protein uL1 family. As to quaternary structure, part of the 50S ribosomal subunit.

Binds directly to 23S rRNA. Probably involved in E site tRNA release. Its function is as follows. Protein L1 is also a translational repressor protein, it controls the translation of its operon by binding to its mRNA. This is Large ribosomal subunit protein uL1 from Nanoarchaeum equitans (strain Kin4-M).